A 289-amino-acid polypeptide reads, in one-letter code: D-alanine aminotransferase (289 aa).

Substrate is bound at residue Y31. R50 contributes to the pyridoxal 5'-phosphate binding site. Substrate contacts are provided by R99 and H101. K147 functions as the Proton acceptor in the catalytic mechanism. At K147 the chain carries N6-(pyridoxal phosphate)lysine. A pyridoxal 5'-phosphate-binding site is contributed by E179.

It belongs to the class-IV pyridoxal-phosphate-dependent aminotransferase family. In terms of assembly, homodimer. It depends on pyridoxal 5'-phosphate as a cofactor.

The catalysed reaction is D-alanine + 2-oxoglutarate = D-glutamate + pyruvate. Its function is as follows. Acts on the D-isomers of alanine, leucine, aspartate, glutamate, aminobutyrate, norvaline and asparagine. The enzyme transfers an amino group from a substrate D-amino acid to the pyridoxal phosphate cofactor to form pyridoxamine and an alpha-keto acid in the first half-reaction. The second half-reaction is the reverse of the first, transferring the amino group from the pyridoxamine to a second alpha-keto acid to form the product D-amino acid via a ping-pong mechanism. This is an important process in the formation of D-alanine and D-glutamate, which are essential bacterial cell wall components. This Listeria monocytogenes serotype 4b (strain F2365) protein is D-alanine aminotransferase (dat).